The following is a 155-amino-acid chain: Small ribosomal subunit protein uS7 (155 aa).

It belongs to the universal ribosomal protein uS7 family. In terms of assembly, part of the 30S ribosomal subunit. Contacts proteins S9 and S11.

Its function is as follows. One of the primary rRNA binding proteins, it binds directly to 16S rRNA where it nucleates assembly of the head domain of the 30S subunit. Is located at the subunit interface close to the decoding center, probably blocks exit of the E-site tRNA. The sequence is that of Small ribosomal subunit protein uS7 from Chlorobium luteolum (strain DSM 273 / BCRC 81028 / 2530) (Pelodictyon luteolum).